Reading from the N-terminus, the 128-residue chain is L-ectoine synthase (128 aa).

Belongs to the ectoine synthase family.

The enzyme catalyses (2S)-4-acetamido-2-aminobutanoate = L-ectoine + H2O. Its pathway is amine and polyamine biosynthesis; ectoine biosynthesis; L-ectoine from L-aspartate 4-semialdehyde: step 3/3. Functionally, catalyzes the circularization of gamma-N-acetyl-alpha,gamma-diaminobutyric acid (ADABA) to ectoine (1,4,5,6-tetrahydro-2-methyl-4-pyrimidine carboxylic acid), which is an excellent osmoprotectant. The protein is L-ectoine synthase of Virgibacillus pantothenticus.